The chain runs to 172 residues: Small ribosomal subunit protein uS5 (172 aa).

The region spanning 17-80 (LREKMISVNR…DEARRKMVKV (64 aa)) is the S5 DRBM domain.

Belongs to the universal ribosomal protein uS5 family. As to quaternary structure, part of the 30S ribosomal subunit. Contacts proteins S4 and S8.

In terms of biological role, with S4 and S12 plays an important role in translational accuracy. Functionally, located at the back of the 30S subunit body where it stabilizes the conformation of the head with respect to the body. The protein is Small ribosomal subunit protein uS5 of Cupriavidus taiwanensis (strain DSM 17343 / BCRC 17206 / CCUG 44338 / CIP 107171 / LMG 19424 / R1) (Ralstonia taiwanensis (strain LMG 19424)).